Reading from the N-terminus, the 348-residue chain is Galactose-1-phosphate uridylyltransferase (348 aa).

28–31 (RAKR) is a binding site for UDP-alpha-D-glucose. Residues C52 and C55 each coordinate Zn(2+). Residues V61 and 77 to 78 (ND) contribute to the UDP-alpha-D-glucose site. H115 lines the Zn(2+) pocket. UDP-alpha-D-glucose is bound by residues N153 and 159-161 (GCS). Residue H164 coordinates Zn(2+). The active-site Tele-UMP-histidine intermediate is H166. Q168 is a UDP-alpha-D-glucose binding site. Residues E182, H281, H296, and H298 each contribute to the Fe cation site. UDP-alpha-D-glucose-binding positions include 311-312 (KF), 316-317 (YE), and Q323.

The protein belongs to the galactose-1-phosphate uridylyltransferase type 1 family. Zn(2+) is required as a cofactor.

The enzyme catalyses alpha-D-galactose 1-phosphate + UDP-alpha-D-glucose = alpha-D-glucose 1-phosphate + UDP-alpha-D-galactose. Its pathway is carbohydrate metabolism; galactose metabolism. The chain is Galactose-1-phosphate uridylyltransferase (galT) from Salmonella typhimurium (strain LT2 / SGSC1412 / ATCC 700720).